The chain runs to 147 residues: Large ribosomal subunit protein bL9 (147 aa).

This sequence belongs to the bacterial ribosomal protein bL9 family.

Binds to the 23S rRNA. The sequence is that of Large ribosomal subunit protein bL9 from Clostridium tetani (strain Massachusetts / E88).